Consider the following 186-residue polypeptide: uncharacterized protein (186 aa).

The N-linked (GlcNAc...) asparagine; by host glycan is linked to Asn34. 3 helical membrane passes run 47-67, 114-134, and 144-164; these read IGMV…ATTF, ILET…IVLL, and LEMI…TLFF.

It is found in the membrane. This is an uncharacterized protein from Acanthamoeba polyphaga mimivirus (APMV).